The chain runs to 354 residues: 3-dehydroquinate synthase (354 aa).

NAD(+)-binding positions include Asp39, Tyr45, 68–71 (EKTK), 100–104 (GATGD), 124–125 (TT), Lys136, Lys145, and 163–166 (FLKT). Residues Glu178, His242, and His256 each coordinate Zn(2+).

This sequence belongs to the sugar phosphate cyclases superfamily. Dehydroquinate synthase family. Requires NAD(+) as cofactor. The cofactor is Co(2+). It depends on Zn(2+) as a cofactor.

Its subcellular location is the cytoplasm. The catalysed reaction is 7-phospho-2-dehydro-3-deoxy-D-arabino-heptonate = 3-dehydroquinate + phosphate. Its pathway is metabolic intermediate biosynthesis; chorismate biosynthesis; chorismate from D-erythrose 4-phosphate and phosphoenolpyruvate: step 2/7. Its function is as follows. Catalyzes the conversion of 3-deoxy-D-arabino-heptulosonate 7-phosphate (DAHP) to dehydroquinate (DHQ). The protein is 3-dehydroquinate synthase of Staphylococcus aureus (strain MRSA252).